The following is a 551-amino-acid chain: DNA ligase (551 aa).

ATP is bound at residue glutamate 246. The N6-AMP-lysine intermediate role is filled by lysine 248. Positions 253, 268, 298, 337, 414, and 420 each coordinate ATP.

This sequence belongs to the ATP-dependent DNA ligase family. Requires Mg(2+) as cofactor.

It catalyses the reaction ATP + (deoxyribonucleotide)n-3'-hydroxyl + 5'-phospho-(deoxyribonucleotide)m = (deoxyribonucleotide)n+m + AMP + diphosphate.. In terms of biological role, DNA ligase that seals nicks in double-stranded DNA during DNA replication, DNA recombination and DNA repair. The protein is DNA ligase of Methanobrevibacter smithii (strain ATCC 35061 / DSM 861 / OCM 144 / PS).